The following is a 323-amino-acid chain: Protease Do-like 5, chloroplastic (323 aa).

Residues 1 to 28 constitute a chloroplast transit peptide; that stretch reads MTMALASSKAFSSIFNTLSPINQSKFVL. The N-terminal 45 residues, 29–73, are a transit peptide targeting the thylakoid; it reads ACSGSNHVDVIDRRRRIMIFGSSLALTSSLLGSNQQRLPMESAIA. Catalysis depends on charge relay system residues His147, Asp188, and Ser266. The serine protease stretch occupies residues 186-283; that stretch reads DNDLAVLKIE…YGHTIGVNTA (98 aa).

This sequence belongs to the peptidase S1C family.

It is found in the plastid. Its subcellular location is the chloroplast thylakoid lumen. Functionally, probable serine protease. This is Protease Do-like 5, chloroplastic (DEGP5) from Arabidopsis thaliana (Mouse-ear cress).